The sequence spans 421 residues: MAESNQNTDGAVEEGEDENTGDSNLQMELSAFRAKWMSELQPSSGGQRSFSRNAELRRRQETAKEEKARELFLKAVEEEQNGAVYEAIKYYKSAMQLVPDIEFKINYSRTPDPERGGSYLESSENNREIDDLLTYFQHQLTLGNDAMKLCEHETETSQVHISALPFEVLMYIFRWVVSCDLDLRALEQLSLVCRGFYICARDPEIWRSACLRVWGRSCTKMLPYSSWREMFLERPRVRFDGVYISKTSYIRQGEESLDGFYRAWHQVEYYRYLRFFPDGQVMMLTTPEDPLVTVPRLRSKNSRMDSIMFGHYRLSQDTDNQTKVYVVVSKRKEEKVSEYQRSRFCRRNPVPEAERSFHVGLQLSSGGRQRFNKLVWIHHSCHITYRSTGETVVTAFDVDKMYTPLFFARVKSYTAFSERPL.

The segment at Met-1–Ala-63 is disordered. The span at Ala-11–Thr-20 shows a compositional bias: acidic residues. Residues Leu-40–Arg-52 show a composition bias toward polar residues. Over residues Ala-54–Ala-63 the composition is skewed to basic and acidic residues. Residues Ala-68 to Ile-101 form a TPR repeat. The F-box domain maps to Gln-158–Ala-209.

Part of the SCF (SKP1-CUL1-F-box) E3 ubiquitin-protein ligase complex SCF(fbxo9).

It localises to the cytoplasm. Its pathway is protein modification; protein ubiquitination. Its function is as follows. Substrate recognition component of a SCF (SKP1-CUL1-F-box protein) E3 ubiquitin-protein ligase complex which mediates the ubiquitination and subsequent proteasomal degradation of target proteins and acts as a regulator of mTOR signaling. The chain is F-box only protein 9 (fbxo9) from Danio rerio (Zebrafish).